The primary structure comprises 392 residues: INCREASED PETAL GROWTH ANISOTROPY 1-like protein 1 (392 aa).

Residues Leu11–His52 adopt a coiled-coil conformation. Polar residues-rich tracts occupy residues Gln65–Ser76 and Pro100–Thr109. Residues Gln65–Val128 are disordered. A coiled-coil region spans residues Lys269–Ser299.

It belongs to the IPGA1 family.

It is found in the cytoplasm. Its subcellular location is the cytoskeleton. Microtubule-associated protein probably involved in the regulation of microtubule organization. This chain is INCREASED PETAL GROWTH ANISOTROPY 1-like protein 1, found in Arabidopsis thaliana (Mouse-ear cress).